A 70-amino-acid polypeptide reads, in one-letter code: Protein SlyX homolog (70 aa).

The protein belongs to the SlyX family.

The sequence is that of Protein SlyX homolog from Agrobacterium fabrum (strain C58 / ATCC 33970) (Agrobacterium tumefaciens (strain C58)).